Consider the following 556-residue polypeptide: MSVSAFNRRWAAVILEALTRHGVRHVCIAPGSRSTPLTLAAAENPAFIHHTHFDERGLGHLALGLAKVSQQPVAVIVTSGTAVANLYPALIEAGLTGEKLILLTADRPPELIDCGANQAIRQAGMFASHPSQTLSLPRPTQDIPARWLVSTIDNALAMLHAGALHINCPFAEPLYGDMNDTGLVWQQRLGDWWQDEKPWLREARRLASDKQRDWFFWRQKRGVVVAGRMSAEEGKKVAQWAQTLGWPLIGDVLSQTGQPLPCADLWLGNAKAVTELQQAQIVVQLGSSLTGKRLLQWQATCEPEEYWVIDNIEGRLDPAHHRGRRLVAKIADWLELHPAEKRKPWCVEIPRLAELAWQRVVAQRDTFGEAQLAHRIRDYLPEQGQLFVGNSLVVRLIDALSQLPAGYPVYSNRGASGIDGLLSTAAGVQRASAKSTLAIVGDLSALYDLNALALLRQVSAPFVLIVVNNNGGQIFSLLPTPQSKRERFYLMPQNVHFDHAAAMFNLRYHRPENWEELESALAGAWRTPAATVIELVVNDTDGAQTLQQLLAQVSHL.

It belongs to the TPP enzyme family. MenD subfamily. As to quaternary structure, homodimer. Mg(2+) serves as cofactor. The cofactor is Mn(2+). Requires thiamine diphosphate as cofactor.

It catalyses the reaction isochorismate + 2-oxoglutarate + H(+) = 5-enolpyruvoyl-6-hydroxy-2-succinyl-cyclohex-3-ene-1-carboxylate + CO2. The protein operates within quinol/quinone metabolism; 1,4-dihydroxy-2-naphthoate biosynthesis; 1,4-dihydroxy-2-naphthoate from chorismate: step 2/7. It functions in the pathway quinol/quinone metabolism; menaquinone biosynthesis. In terms of biological role, catalyzes the thiamine diphosphate-dependent decarboxylation of 2-oxoglutarate and the subsequent addition of the resulting succinic semialdehyde-thiamine pyrophosphate anion to isochorismate to yield 2-succinyl-5-enolpyruvyl-6-hydroxy-3-cyclohexene-1-carboxylate (SEPHCHC). This chain is 2-succinyl-5-enolpyruvyl-6-hydroxy-3-cyclohexene-1-carboxylate synthase, found in Salmonella heidelberg (strain SL476).